We begin with the raw amino-acid sequence, 128 residues long: Small ribosomal subunit protein uS11 (128 aa).

This sequence belongs to the universal ribosomal protein uS11 family. As to quaternary structure, part of the 30S ribosomal subunit. Interacts with proteins S7 and S18. Binds to IF-3.

Functionally, located on the platform of the 30S subunit, it bridges several disparate RNA helices of the 16S rRNA. Forms part of the Shine-Dalgarno cleft in the 70S ribosome. The polypeptide is Small ribosomal subunit protein uS11 (Chloroherpeton thalassium (strain ATCC 35110 / GB-78)).